A 307-amino-acid chain; its full sequence is MALLTPLFAFLYHLPQVYKWLLKPYYIASLFMSIAFVMIRKMPGVCEHLSTQREDGNSCDFDWREVEILMFLSAIVMMKNRRAITIEQHVGNIILFCKVANVILFFRLDIRLGLLYLTLCIVFLMTCKPPLYMGPEYIKYFSDKTIDEELEKDHRVTWIVEFFANWSPECQSFASVYADLSLKYNCAGLKFGKVDIGRYGEVSKKYRVSTSPLSKQLPSLVLFQGGKEVMRRPQVDKKGRAVSWTFTEENIIREFNLNELYQKSKKLGKTKEKLERPSELVFSTVPEEEEPEAETISAMDTESKKDK.

An N-terminal signal peptide occupies residues 1-19 (MALLTPLFAFLYHLPQVYK). Residues 20–111 (WLLKPYYIAS…VILFFRLDIR (92 aa)) lie on the Extracellular side of the membrane. Residues 112-132 (LGLLYLTLCIVFLMTCKPPLY) traverse the membrane as a helical segment. One can recognise a Thioredoxin domain in the interval 132 to 269 (YMGPEYIKYF…LYQKSKKLGK (138 aa)). The Cytoplasmic portion of the chain corresponds to 133 to 307 (MGPEYIKYFS…AMDTESKKDK (175 aa)). Residues 268–307 (GKTKEKLERPSELVFSTVPEEEEPEAETISAMDTESKKDK) are disordered. The segment covering 269–278 (KTKEKLERPS) has biased composition (basic and acidic residues). Positions 304–307 (KKDK) match the Di-lysine motif motif.

Monomer. Homodimer; disulfide-linked. Occurs in both reduced and oxidized monomeric form. Oxidative conditions increase homodimerization.

The protein localises to the endoplasmic reticulum membrane. It localises to the mitochondrion membrane. In terms of biological role, endoplasmic reticulum and mitochondria-associated protein that probably functions as a regulator of cellular redox state and thereby regulates protein post-translational modification, protein folding and mitochondrial activity. In Danio rerio (Zebrafish), this protein is Thioredoxin-related transmembrane protein 2-B (tmx2b).